Reading from the N-terminus, the 201-residue chain is LexA repressor (201 aa).

Residues 29 to 49 constitute a DNA-binding region (H-T-H motif); the sequence is VREICKAVGLSSTSSVHFHLK. Catalysis depends on for autocatalytic cleavage activity residues Ser125 and Lys162.

The protein belongs to the peptidase S24 family. As to quaternary structure, homodimer.

It catalyses the reaction Hydrolysis of Ala-|-Gly bond in repressor LexA.. Represses a number of genes involved in the response to DNA damage (SOS response), including recA and lexA. In the presence of single-stranded DNA, RecA interacts with LexA causing an autocatalytic cleavage which disrupts the DNA-binding part of LexA, leading to derepression of the SOS regulon and eventually DNA repair. This Clostridium botulinum (strain 657 / Type Ba4) protein is LexA repressor.